The sequence spans 97 residues: Co-chaperonin GroES (97 aa).

It belongs to the GroES chaperonin family. As to quaternary structure, heptamer of 7 subunits arranged in a ring. Interacts with the chaperonin GroEL.

The protein resides in the cytoplasm. Its function is as follows. Together with the chaperonin GroEL, plays an essential role in assisting protein folding. The GroEL-GroES system forms a nano-cage that allows encapsulation of the non-native substrate proteins and provides a physical environment optimized to promote and accelerate protein folding. GroES binds to the apical surface of the GroEL ring, thereby capping the opening of the GroEL channel. In Yersinia pseudotuberculosis serotype O:1b (strain IP 31758), this protein is Co-chaperonin GroES.